The chain runs to 225 residues: Deoxyribose-phosphate aldolase (225 aa).

Asp94 serves as the catalytic Proton donor/acceptor. Lys158 serves as the catalytic Schiff-base intermediate with acetaldehyde. The Proton donor/acceptor role is filled by Lys187.

Belongs to the DeoC/FbaB aldolase family. DeoC type 1 subfamily.

It localises to the cytoplasm. The enzyme catalyses 2-deoxy-D-ribose 5-phosphate = D-glyceraldehyde 3-phosphate + acetaldehyde. Its pathway is carbohydrate degradation; 2-deoxy-D-ribose 1-phosphate degradation; D-glyceraldehyde 3-phosphate and acetaldehyde from 2-deoxy-alpha-D-ribose 1-phosphate: step 2/2. In terms of biological role, catalyzes a reversible aldol reaction between acetaldehyde and D-glyceraldehyde 3-phosphate to generate 2-deoxy-D-ribose 5-phosphate. The chain is Deoxyribose-phosphate aldolase from Thermococcus gammatolerans (strain DSM 15229 / JCM 11827 / EJ3).